The sequence spans 98 residues: Defensin-A1 (98 aa).

The first 19 residues, 1–19, serve as a signal peptide directing secretion; that stretch reads MQTLSFLLALLFLVAQTPA. Positions 20–62 are excised as a propeptide; the sequence is QPTGEGEKGGTIQEPEATEAQDTAAVLMAAGAADGDDSDTKQL. Cystine bridges form between Cys67-Cys94, Cys69-Cys83, and Cys73-Cys93. A propeptide spanning residues 97–98 is cleaved from the precursor; it reads IK.

This sequence belongs to the alpha-defensin family. Highly expressed in intestine, and expressed at lower levels in lung and spleen.

The protein resides in the secreted. Its function is as follows. Has antimicrobial activity. The chain is Defensin-A1 from Ornithorhynchus anatinus (Duckbill platypus).